We begin with the raw amino-acid sequence, 239 residues long: Proteasome activator complex subunit 2 (239 aa).

The residue at position 2 (alanine 2) is an N-acetylalanine. Serine 10 is modified (phosphoserine). Residues 65-87 form a disordered region; the sequence is DIPIPDPPPKDDEMETDKQEKKE. The span at 72–87 shows a compositional bias: basic and acidic residues; sequence PPKDDEMETDKQEKKE.

It belongs to the PA28 family. As to quaternary structure, heterodimer of PSME1 and PSME2, which forms a hexameric ring.

In terms of biological role, implicated in immunoproteasome assembly and required for efficient antigen processing. The PA28 activator complex enhances the generation of class I binding peptides by altering the cleavage pattern of the proteasome. The polypeptide is Proteasome activator complex subunit 2 (Psme2) (Mus musculus (Mouse)).